Reading from the N-terminus, the 363-residue chain is UDP-3-O-acylglucosamine N-acyltransferase (363 aa).

Histidine 266 (proton acceptor) is an active-site residue.

It belongs to the transferase hexapeptide repeat family. LpxD subfamily. As to quaternary structure, homotrimer.

It carries out the reaction a UDP-3-O-[(3R)-3-hydroxyacyl]-alpha-D-glucosamine + a (3R)-hydroxyacyl-[ACP] = a UDP-2-N,3-O-bis[(3R)-3-hydroxyacyl]-alpha-D-glucosamine + holo-[ACP] + H(+). The protein operates within bacterial outer membrane biogenesis; LPS lipid A biosynthesis. In terms of biological role, catalyzes the N-acylation of UDP-3-O-acylglucosamine using 3-hydroxyacyl-ACP as the acyl donor. Is involved in the biosynthesis of lipid A, a phosphorylated glycolipid that anchors the lipopolysaccharide to the outer membrane of the cell. In Bordetella bronchiseptica (strain ATCC BAA-588 / NCTC 13252 / RB50) (Alcaligenes bronchisepticus), this protein is UDP-3-O-acylglucosamine N-acyltransferase.